Reading from the N-terminus, the 81-residue chain is Acyl carrier protein (81 aa).

The region spanning 2-80 (ASKDEILAGL…DAVNFIDNAQ (79 aa)) is the Carrier domain. Ser40 bears the O-(pantetheine 4'-phosphoryl)serine mark.

It belongs to the acyl carrier protein (ACP) family. 4'-phosphopantetheine is transferred from CoA to a specific serine of apo-ACP by AcpS. This modification is essential for activity because fatty acids are bound in thioester linkage to the sulfhydryl of the prosthetic group.

It localises to the cytoplasm. The protein operates within lipid metabolism; fatty acid biosynthesis. Carrier of the growing fatty acid chain in fatty acid biosynthesis. In Kocuria rhizophila (strain ATCC 9341 / DSM 348 / NBRC 103217 / DC2201), this protein is Acyl carrier protein.